We begin with the raw amino-acid sequence, 142 residues long: Large ribosomal subunit protein uL13 (142 aa).

The protein belongs to the universal ribosomal protein uL13 family. Part of the 50S ribosomal subunit.

Functionally, this protein is one of the early assembly proteins of the 50S ribosomal subunit, although it is not seen to bind rRNA by itself. It is important during the early stages of 50S assembly. This is Large ribosomal subunit protein uL13 from Pseudoalteromonas translucida (strain TAC 125).